The following is a 404-amino-acid chain: Cytochrome b561 and DOMON domain-containing protein At5g35735 (404 aa).

Positions 1–25 (MDRTQSPKTALFAVLATLLVLTVNG) are cleaved as a signal peptide. One can recognise a DOMON domain in the interval 49–164 (LGSFLHWTYN…ITANQLWQVG (116 aa)). A Cytochrome b561 domain is found at 170 to 369 (VPASHQTSGD…LEPLTWFIVL (200 aa)). The interval 172–207 (ASHQTSGDNMRSSGRIDFRTGQASAGGGGSGDRLRK) is disordered. A compositionally biased stretch (polar residues) spans 173–183 (SHQTSGDNMRS). A run of 2 helical transmembrane segments spans residues 210–230 (THGV…AMMA) and 241–261 (WFYL…AGWA). Residues histidine 211, histidine 245, and histidine 278 each contribute to the heme b site. The helical transmembrane segment at 280-300 (NLGIALFTFATLQVFALLVRP) threads the bilayer. Position 314 (histidine 314) interacts with heme b. The next 2 helical transmembrane spans lie at 316–336 (TVGY…FDIL) and 349–369 (ILIF…FIVL). The disordered stretch occupies residues 376–404 (GNTVAAPTSSKYSNGVNGTTTTGPHHQDA). Polar residues predominate over residues 380–404 (AAPTSSKYSNGVNGTTTTGPHHQDA).

The cofactor is heme b.

It is found in the membrane. Functionally, may act as a catecholamine-responsive trans-membrane electron transporter. The polypeptide is Cytochrome b561 and DOMON domain-containing protein At5g35735 (Arabidopsis thaliana (Mouse-ear cress)).